Consider the following 499-residue polypeptide: MEFSVKNGSVEKQRTACLVVGVYEPRRLSAAAEQLDKLSEGYISTLLRRGDLEGKAGQTLLLHNVPNVPADRVLLVGCGKERELTERQYKQIIQKMVQAVSETGSMEVVCFLTELHVKGRTSYWNVRFAIEAIQESLYSYNDFKSIKPEVRREFRRVIFNVANRKDLADAERALEQGKAISTGVAFAKNVANCPPNVCNPAYLAELAKGLAAEYDNIRTTVIDEAEMAALGMNAYLAVSRGSQNPAYLSVIEYKNHPNPDAKPIVLVGKGLTFDSGGISIKPSDSMDEMKYDMGGAASVYGTMKALAEMKLPLNVIGVLAGCENMPDGNAYRPGDILTTMNGLTVEVLNTDAEGRLVLCDTLTYVERFEPELVIDMATLTGACMIALGAHNSGLMSTSNVLANDLLNAAEQADDKAWRLPLGEEYQEQLKSNFADLANIGGRLGGAITAGQLLSNFTKKYVWAHLDIAGTAWKSGVAKGATGRPVSLLSQFLINKANNQ.

2 residues coordinate Mn(2+): Lys269 and Asp274. Residue Lys281 is part of the active site. Mn(2+) contacts are provided by Asp292, Asp351, and Glu353. The active site involves Arg355.

Belongs to the peptidase M17 family. Requires Mn(2+) as cofactor.

It is found in the cytoplasm. It catalyses the reaction Release of an N-terminal amino acid, Xaa-|-Yaa-, in which Xaa is preferably Leu, but may be other amino acids including Pro although not Arg or Lys, and Yaa may be Pro. Amino acid amides and methyl esters are also readily hydrolyzed, but rates on arylamides are exceedingly low.. The enzyme catalyses Release of an N-terminal amino acid, preferentially leucine, but not glutamic or aspartic acids.. Presumably involved in the processing and regular turnover of intracellular proteins. Catalyzes the removal of unsubstituted N-terminal amino acids from various peptides. The polypeptide is Probable cytosol aminopeptidase (Actinobacillus pleuropneumoniae serotype 3 (strain JL03)).